The chain runs to 440 residues: Translation initiation factor eIF2B subunit gamma (440 aa).

It belongs to the eIF-2B gamma/epsilon subunits family. In terms of assembly, component of the translation initiation factor 2B (eIF2B) complex which is a heterodecamer of two sets of five different subunits: alpha, beta, gamma, delta and epsilon. Subunits alpha, beta and delta comprise a regulatory subcomplex and subunits epsilon and gamma comprise a catalytic subcomplex. Within the complex, the hexameric regulatory complex resides at the center, with the two heterodimeric catalytic subcomplexes bound on opposite sides.

It is found in the cytoplasm. The protein resides in the cytosol. Acts as a component of the translation initiation factor 2B (eIF2B) complex, which catalyzes the exchange of GDP for GTP on the eukaryotic initiation factor 2 (eIF2) complex gamma subunit. Its guanine nucleotide exchange factor activity is repressed when bound to eIF2 complex phosphorylated on the alpha subunit, thereby limiting the amount of methionyl-initiator methionine tRNA available to the ribosome and consequently global translation is repressed. This is Translation initiation factor eIF2B subunit gamma (eif2b3) from Dictyostelium discoideum (Social amoeba).